A 420-amino-acid chain; its full sequence is ATP phosphoribosyltransferase regulatory subunit (420 aa).

This sequence belongs to the class-II aminoacyl-tRNA synthetase family. HisZ subfamily. Heteromultimer composed of HisG and HisZ subunits.

The protein resides in the cytoplasm. Its pathway is amino-acid biosynthesis; L-histidine biosynthesis; L-histidine from 5-phospho-alpha-D-ribose 1-diphosphate: step 1/9. In terms of biological role, required for the first step of histidine biosynthesis. May allow the feedback regulation of ATP phosphoribosyltransferase activity by histidine. This Bacillus cereus (strain AH820) protein is ATP phosphoribosyltransferase regulatory subunit.